The following is a 611-amino-acid chain: Acetylcholinesterase (611 aa).

Positions 1 to 31 are cleaved as a signal peptide; it reads MRPPWCPLYTPSLAAPILLLLLFLLGGGAEA. A disulfide bridge connects residues Cys-97 and Cys-124. Ser-231 functions as the Acyl-ester intermediate in the catalytic mechanism. Cys-285 and Cys-300 are oxidised to a cystine. An N-linked (GlcNAc...) asparagine glycan is attached at Asn-293. The active-site Charge relay system is the Glu-362. Residue Asn-378 is glycosylated (N-linked (GlcNAc...) asparagine). A disulfide bond links Cys-437 and Cys-557. Residue His-475 is the Charge relay system of the active site. The N-linked (GlcNAc...) asparagine glycan is linked to Asn-492.

It belongs to the type-B carboxylesterase/lipase family. Interacts with PRIMA1. The interaction with PRIMA1 is required to anchor it to the basal lamina of cells and organize into tetramers. Isoform H generates GPI-anchored dimers; disulfide linked. Isoform T generates multiple structures, ranging from monomers and dimers to collagen-tailed and hydrophobic-tailed forms, in which catalytic tetramers are associated with anchoring proteins that attach them to the basal lamina or to cell membranes. In the collagen-tailed forms, isoform T subunits are associated with a specific collagen, COLQ, which triggers the formation of isoform T tetramers, from monomers and dimers.

It localises to the synapse. Its subcellular location is the secreted. It is found in the cell membrane. The enzyme catalyses acetylcholine + H2O = choline + acetate + H(+). Its function is as follows. Terminates signal transduction at the neuromuscular junction by rapid hydrolysis of the acetylcholine released into the synaptic cleft. This chain is Acetylcholinesterase (ACHE), found in Felis catus (Cat).